We begin with the raw amino-acid sequence, 129 residues long: Glycine cleavage system H protein (129 aa).

Residues 24 to 106 form the Lipoyl-binding domain; it reads SVVVGVTQHA…YGAGWIVEIE (83 aa). Residue lysine 65 is modified to N6-lipoyllysine.

The protein belongs to the GcvH family. In terms of assembly, the glycine cleavage system is composed of four proteins: P, T, L and H. Requires (R)-lipoate as cofactor.

Its function is as follows. The glycine cleavage system catalyzes the degradation of glycine. The H protein shuttles the methylamine group of glycine from the P protein to the T protein. This Myxococcus xanthus (strain DK1622) protein is Glycine cleavage system H protein.